The following is a 454-amino-acid chain: MPTVHVIGLGRSGIAAARLLKRQGWQVEVSDRRQTPALQSQQQLLQAEGIPVQLNYDFDLQTLISVGLRVPDEIVISPGVPWHSPALVAARQAGIPVRGEVAIAWQTLAHLPWVCITGTNGKTTTTALTAAIFQAAGYNAPACGNIGNSICEVALTARALDWVIAEISSYQLESSPPLQPEFALWTTLTPDHLERHGTLDAYVATKAHLMNGAKHVILNGDDPYLRQHMVNRWPQAWWISTQGAIALPKGIAQGIYIAEDQVWFQDQPLLPTHILQMPGRHNQQNFLLAVATAHLAGIPAETIAKGVAGFAGVPHRLERIRQWREVEWINDSKATNYDAAEIGLRSVTGPVILIAGGQAKKGDDRPWLNLIQEKAAWVLLIGEAAPQFAQRLEAIGFTNYEIMETLDRAVAAAAELVTQYPIKTVLFSPGCASFDQYQNFEERGDHFRQLCLEL.

Position 118-124 (118-124 (GTNGKTT)) interacts with ATP.

This sequence belongs to the MurCDEF family.

The protein resides in the cytoplasm. The enzyme catalyses UDP-N-acetyl-alpha-D-muramoyl-L-alanine + D-glutamate + ATP = UDP-N-acetyl-alpha-D-muramoyl-L-alanyl-D-glutamate + ADP + phosphate + H(+). Its pathway is cell wall biogenesis; peptidoglycan biosynthesis. In terms of biological role, cell wall formation. Catalyzes the addition of glutamate to the nucleotide precursor UDP-N-acetylmuramoyl-L-alanine (UMA). This chain is UDP-N-acetylmuramoylalanine--D-glutamate ligase, found in Thermosynechococcus vestitus (strain NIES-2133 / IAM M-273 / BP-1).